A 163-amino-acid chain; its full sequence is UPF0262 protein RPE_4483 (163 aa).

Belongs to the UPF0262 family.

The protein is UPF0262 protein RPE_4483 of Rhodopseudomonas palustris (strain BisA53).